The sequence spans 402 residues: 1-deoxy-D-xylulose 5-phosphate reductoisomerase (402 aa).

NADPH contacts are provided by Thr25, Gly26, Ser27, Val28, Arg52, Asn53, and Asn136. Lys137 serves as a coordination point for 1-deoxy-D-xylulose 5-phosphate. Glu138 contributes to the NADPH binding site. Asp162 is a Mn(2+) binding site. Ser163, Glu164, Ser188, and His211 together coordinate 1-deoxy-D-xylulose 5-phosphate. A Mn(2+)-binding site is contributed by Glu164. Gly217 provides a ligand contact to NADPH. Ser224, Asn229, Lys230, and Glu233 together coordinate 1-deoxy-D-xylulose 5-phosphate. Mn(2+) is bound at residue Glu233.

Belongs to the DXR family. Mg(2+) is required as a cofactor. Mn(2+) serves as cofactor.

It carries out the reaction 2-C-methyl-D-erythritol 4-phosphate + NADP(+) = 1-deoxy-D-xylulose 5-phosphate + NADPH + H(+). Its pathway is isoprenoid biosynthesis; isopentenyl diphosphate biosynthesis via DXP pathway; isopentenyl diphosphate from 1-deoxy-D-xylulose 5-phosphate: step 1/6. Catalyzes the NADPH-dependent rearrangement and reduction of 1-deoxy-D-xylulose-5-phosphate (DXP) to 2-C-methyl-D-erythritol 4-phosphate (MEP). The sequence is that of 1-deoxy-D-xylulose 5-phosphate reductoisomerase from Rhodospirillum centenum (strain ATCC 51521 / SW).